An 842-amino-acid polypeptide reads, in one-letter code: Alpha-glucan phosphorylase, H isozyme (842 aa).

Lys688 is modified (N6-(pyridoxal phosphate)lysine).

It belongs to the glycogen phosphorylase family. Requires pyridoxal 5'-phosphate as cofactor.

Its subcellular location is the cytoplasm. The catalysed reaction is [(1-&gt;4)-alpha-D-glucosyl](n) + phosphate = [(1-&gt;4)-alpha-D-glucosyl](n-1) + alpha-D-glucose 1-phosphate. Its function is as follows. Phosphorylase is an important allosteric enzyme in carbohydrate metabolism. Enzymes from different sources differ in their regulatory mechanisms and in their natural substrates. However, all known phosphorylases share catalytic and structural properties. The H isoform exhibits higher affinity for branched polyglucans such as soluble starch or glycogen. The protein is Alpha-glucan phosphorylase, H isozyme of Vicia faba (Broad bean).